We begin with the raw amino-acid sequence, 499 residues long: Maturase K (499 aa).

Belongs to the intron maturase 2 family. MatK subfamily.

Its subcellular location is the plastid. It localises to the chloroplast. Usually encoded in the trnK tRNA gene intron. Probably assists in splicing its own and other chloroplast group II introns. In Ceratonia siliqua (Carob), this protein is Maturase K.